A 199-amino-acid polypeptide reads, in one-letter code: 7-methyl-GTP pyrophosphatase (199 aa).

Aspartate 76 serves as the catalytic Proton acceptor.

The protein belongs to the Maf family. YceF subfamily. The cofactor is a divalent metal cation.

The protein resides in the cytoplasm. The enzyme catalyses N(7)-methyl-GTP + H2O = N(7)-methyl-GMP + diphosphate + H(+). In terms of biological role, nucleoside triphosphate pyrophosphatase that hydrolyzes 7-methyl-GTP (m(7)GTP). May have a dual role in cell division arrest and in preventing the incorporation of modified nucleotides into cellular nucleic acids. This is 7-methyl-GTP pyrophosphatase (maf-2) from Brucella suis biovar 1 (strain 1330).